We begin with the raw amino-acid sequence, 297 residues long: Probable transcription factor vicR (297 aa).

Disordered stretches follow at residues 45-80 (LPGL…HSET) and 100-134 (TNQA…KNVH). The span at 58–67 (QKEEMRRKNA) shows a compositional bias: basic and acidic residues. Residues 69-80 (AQMQNDSNHSET) are compositionally biased toward polar residues. Residues 110 to 124 (RSREDITNSRAERHS) are compositionally biased toward basic and acidic residues.

Its subcellular location is the nucleus. Its function is as follows. Probable transcription factor; part of the gene cluster that mediates the biosynthesis of the secondary metabolite victorin, the molecular basis for Victoria blight of oats. May play a role in the regulation of the production of victorin. In Bipolaris victoriae (strain FI3) (Victoria blight of oats agent), this protein is Probable transcription factor vicR.